A 192-amino-acid polypeptide reads, in one-letter code: Thymidine kinase (192 aa).

ATP is bound by residues 9–16 and 87–90; these read STMNAGKS and DEAQ. Catalysis depends on glutamate 88, which acts as the Proton acceptor. Zn(2+)-binding residues include cysteine 145, cysteine 147, cysteine 182, and histidine 185.

This sequence belongs to the thymidine kinase family. In terms of assembly, homotetramer.

It localises to the cytoplasm. The catalysed reaction is thymidine + ATP = dTMP + ADP + H(+). The chain is Thymidine kinase from Pasteurella multocida (strain Pm70).